Consider the following 262-residue polypeptide: Indole-3-glycerol phosphate synthase (262 aa).

This sequence belongs to the TrpC family.

It carries out the reaction 1-(2-carboxyphenylamino)-1-deoxy-D-ribulose 5-phosphate + H(+) = (1S,2R)-1-C-(indol-3-yl)glycerol 3-phosphate + CO2 + H2O. It participates in amino-acid biosynthesis; L-tryptophan biosynthesis; L-tryptophan from chorismate: step 4/5. The polypeptide is Indole-3-glycerol phosphate synthase (Dechloromonas aromatica (strain RCB)).